The chain runs to 118 residues: Small ribosomal subunit protein uS13 (118 aa).

Residues 94-118 are disordered; that stretch reads GLPVRGQRTQTNARTRKGPRRLARK. Residues 107 to 118 show a composition bias toward basic residues; sequence RTRKGPRRLARK.

The protein belongs to the universal ribosomal protein uS13 family. As to quaternary structure, part of the 30S ribosomal subunit. Forms a loose heterodimer with protein S19. Forms two bridges to the 50S subunit in the 70S ribosome.

Its function is as follows. Located at the top of the head of the 30S subunit, it contacts several helices of the 16S rRNA. In the 70S ribosome it contacts the 23S rRNA (bridge B1a) and protein L5 of the 50S subunit (bridge B1b), connecting the 2 subunits; these bridges are implicated in subunit movement. Contacts the tRNAs in the A and P-sites. The polypeptide is Small ribosomal subunit protein uS13 (Nitrosococcus oceani (strain ATCC 19707 / BCRC 17464 / JCM 30415 / NCIMB 11848 / C-107)).